The following is a 367-amino-acid chain: Heme A synthase (367 aa).

The next 5 helical transmembrane spans lie at 12-32 (GAVR…VAVG), 99-119 (LLGR…WWQG), 127-147 (LGLL…WIMV), 163-183 (LALH…LAAG), and 198-218 (ATAL…GLVA). Residue histidine 264 coordinates heme. 3 helical membrane-spanning segments follow: residues 266–286 (VTAY…RLTG), 296–316 (GVVI…LLAV), and 317–337 (PLWA…MATV). Position 324 (histidine 324) interacts with heme.

Belongs to the COX15/CtaA family. Type 2 subfamily. Interacts with CtaB. It depends on heme b as a cofactor.

Its subcellular location is the cell membrane. It carries out the reaction Fe(II)-heme o + 2 A + H2O = Fe(II)-heme a + 2 AH2. Its pathway is porphyrin-containing compound metabolism; heme A biosynthesis; heme A from heme O: step 1/1. In terms of biological role, catalyzes the conversion of heme O to heme A by two successive hydroxylations of the methyl group at C8. The first hydroxylation forms heme I, the second hydroxylation results in an unstable dihydroxymethyl group, which spontaneously dehydrates, resulting in the formyl group of heme A. The polypeptide is Heme A synthase (Methylobacterium radiotolerans (strain ATCC 27329 / DSM 1819 / JCM 2831 / NBRC 15690 / NCIMB 10815 / 0-1)).